Consider the following 282-residue polypeptide: Pantothenate synthetase (282 aa).

33 to 40 (MGALHAGH) contributes to the ATP binding site. H40 (proton donor) is an active-site residue. Q64 is a (R)-pantoate binding site. Beta-alanine is bound at residue Q64. 150 to 153 (GEKD) contacts ATP. (R)-pantoate is bound at residue Q156. ATP-binding positions include V179 and 187–190 (LSSR).

This sequence belongs to the pantothenate synthetase family. As to quaternary structure, homodimer.

It is found in the cytoplasm. It carries out the reaction (R)-pantoate + beta-alanine + ATP = (R)-pantothenate + AMP + diphosphate + H(+). It participates in cofactor biosynthesis; (R)-pantothenate biosynthesis; (R)-pantothenate from (R)-pantoate and beta-alanine: step 1/1. In terms of biological role, catalyzes the condensation of pantoate with beta-alanine in an ATP-dependent reaction via a pantoyl-adenylate intermediate. This is Pantothenate synthetase from Rhodospirillum rubrum (strain ATCC 11170 / ATH 1.1.1 / DSM 467 / LMG 4362 / NCIMB 8255 / S1).